We begin with the raw amino-acid sequence, 327 residues long: Lipoyl synthase (327 aa).

The [4Fe-4S] cluster site is built by cysteine 75, cysteine 80, cysteine 86, cysteine 101, cysteine 105, cysteine 108, and serine 315. The Radical SAM core domain occupies 87-304 (FGNGTATFMI…EEEAYKMGFS (218 aa)).

The protein belongs to the radical SAM superfamily. Lipoyl synthase family. The cofactor is [4Fe-4S] cluster.

The protein localises to the cytoplasm. The enzyme catalyses [[Fe-S] cluster scaffold protein carrying a second [4Fe-4S](2+) cluster] + N(6)-octanoyl-L-lysyl-[protein] + 2 oxidized [2Fe-2S]-[ferredoxin] + 2 S-adenosyl-L-methionine + 4 H(+) = [[Fe-S] cluster scaffold protein] + N(6)-[(R)-dihydrolipoyl]-L-lysyl-[protein] + 4 Fe(3+) + 2 hydrogen sulfide + 2 5'-deoxyadenosine + 2 L-methionine + 2 reduced [2Fe-2S]-[ferredoxin]. The protein operates within protein modification; protein lipoylation via endogenous pathway; protein N(6)-(lipoyl)lysine from octanoyl-[acyl-carrier-protein]: step 2/2. Functionally, catalyzes the radical-mediated insertion of two sulfur atoms into the C-6 and C-8 positions of the octanoyl moiety bound to the lipoyl domains of lipoate-dependent enzymes, thereby converting the octanoylated domains into lipoylated derivatives. In Variovorax paradoxus (strain S110), this protein is Lipoyl synthase.